The primary structure comprises 226 residues: Urease accessory protein UreF (226 aa).

Belongs to the UreF family. As to quaternary structure, ureD, UreF and UreG form a complex that acts as a GTP-hydrolysis-dependent molecular chaperone, activating the urease apoprotein by helping to assemble the nickel containing metallocenter of UreC. The UreE protein probably delivers the nickel.

The protein resides in the cytoplasm. In terms of biological role, required for maturation of urease via the functional incorporation of the urease nickel metallocenter. This chain is Urease accessory protein UreF, found in Burkholderia ambifaria (strain MC40-6).